The sequence spans 285 residues: Pantothenate synthetase (285 aa).

30–37 (MGFLHEGH) serves as a coordination point for ATP. His37 functions as the Proton donor in the catalytic mechanism. Gln61 contacts (R)-pantoate. Gln61 serves as a coordination point for beta-alanine. 147–150 (GQKD) provides a ligand contact to ATP. Gln153 contacts (R)-pantoate. ATP-binding positions include Val176 and 184 to 187 (KSSR).

It belongs to the pantothenate synthetase family. Homodimer.

It is found in the cytoplasm. It catalyses the reaction (R)-pantoate + beta-alanine + ATP = (R)-pantothenate + AMP + diphosphate + H(+). It participates in cofactor biosynthesis; (R)-pantothenate biosynthesis; (R)-pantothenate from (R)-pantoate and beta-alanine: step 1/1. In terms of biological role, catalyzes the condensation of pantoate with beta-alanine in an ATP-dependent reaction via a pantoyl-adenylate intermediate. This Listeria innocua serovar 6a (strain ATCC BAA-680 / CLIP 11262) protein is Pantothenate synthetase.